Consider the following 507-residue polypeptide: Serine/threonine-protein kinase BSK11 (507 aa).

A lipid anchor (N-myristoyl glycine) is attached at glycine 2. The segment covering 16–26 has biased composition (basic and acidic residues); that stretch reads DKKITSDDLSG. The tract at residues 16-44 is disordered; sequence DKKITSDDLSGRRGKGAKRGNRHRHANIN. Residues 27-41 are compositionally biased toward basic residues; it reads RRGKGAKRGNRHRHA. A Protein kinase domain is found at 75 to 332; that stretch reads NAVVSVCSDQ…GDIISVITTL (258 aa). Residues 81–89 and lysine 106 each bind ATP; that span reads CSDQEPNLV. The active-site Proton acceptor is aspartate 200.

It belongs to the protein kinase superfamily. Ser/Thr protein kinase family. Interacts with BRI1, ASK7/BIN2, BSK1, BSK6 and BSK8. In terms of processing, phosphorylated by BRI1, ASK7/BIN2 and ASK9/BIL2.

The protein localises to the cell membrane. It carries out the reaction L-seryl-[protein] + ATP = O-phospho-L-seryl-[protein] + ADP + H(+). It catalyses the reaction L-threonyl-[protein] + ATP = O-phospho-L-threonyl-[protein] + ADP + H(+). In terms of biological role, probable serine/threonine kinase that acts as a positive regulator of brassinosteroid (BR) signaling downstream of the receptor kinase BRI1. This is Serine/threonine-protein kinase BSK11 from Arabidopsis thaliana (Mouse-ear cress).